The following is a 250-amino-acid chain: 2,3-bisphosphoglycerate-dependent phosphoglycerate mutase (250 aa).

Substrate-binding positions include 8–15 (RHGESKWN), 21–22 (TG), R60, 87–90 (ERHY), K98, 114–115 (RR), and 183–184 (GN). Catalysis depends on H9, which acts as the Tele-phosphohistidine intermediate. E87 functions as the Proton donor/acceptor in the catalytic mechanism.

The protein belongs to the phosphoglycerate mutase family. BPG-dependent PGAM subfamily.

It catalyses the reaction (2R)-2-phosphoglycerate = (2R)-3-phosphoglycerate. It participates in carbohydrate degradation; glycolysis; pyruvate from D-glyceraldehyde 3-phosphate: step 3/5. Functionally, catalyzes the interconversion of 2-phosphoglycerate and 3-phosphoglycerate. In Borrelia recurrentis (strain A1), this protein is 2,3-bisphosphoglycerate-dependent phosphoglycerate mutase.